Consider the following 223-residue polypeptide: Large ribosomal subunit protein bL21 (223 aa).

Residues 110 to 149 (TALKSTTAEPKAADAPKAKAKAAPKAEKAAAPKAEKAPAK) are disordered. Residues 133–147 (PKAEKAAAPKAEKAP) are compositionally biased toward basic and acidic residues.

Belongs to the bacterial ribosomal protein bL21 family. As to quaternary structure, part of the 50S ribosomal subunit. Contacts protein L20.

In terms of biological role, this protein binds to 23S rRNA in the presence of protein L20. In Maricaulis maris (strain MCS10) (Caulobacter maris), this protein is Large ribosomal subunit protein bL21.